The sequence spans 127 residues: Small ribosomal subunit protein bS6 (127 aa).

The disordered stretch occupies residues 101–127 (PMMKEEKARDLLQGAKADAPAEQPAAA). Positions 115-127 (AKADAPAEQPAAA) are enriched in low complexity.

It belongs to the bacterial ribosomal protein bS6 family.

In terms of biological role, binds together with bS18 to 16S ribosomal RNA. This Thiobacillus denitrificans (strain ATCC 25259 / T1) protein is Small ribosomal subunit protein bS6.